An 86-amino-acid chain; its full sequence is Large ribosomal subunit protein bL28 (86 aa).

It belongs to the bacterial ribosomal protein bL28 family.

This Bacteroides thetaiotaomicron (strain ATCC 29148 / DSM 2079 / JCM 5827 / CCUG 10774 / NCTC 10582 / VPI-5482 / E50) protein is Large ribosomal subunit protein bL28.